Here is a 203-residue protein sequence, read N- to C-terminus: Guanylate kinase (203 aa).

Residues 3–181 enclose the Guanylate kinase-like domain; the sequence is GTLYIVAAPS…AVSEMCAIFT (179 aa). 10 to 17 contributes to the ATP binding site; it reads APSGAGKS.

The protein belongs to the guanylate kinase family.

It localises to the cytoplasm. The catalysed reaction is GMP + ATP = GDP + ADP. Essential for recycling GMP and indirectly, cGMP. The protein is Guanylate kinase of Xanthomonas campestris pv. campestris (strain 8004).